We begin with the raw amino-acid sequence, 124 residues long: Acidic protein MsyB (124 aa).

Residues 96–124 (HEWDEGEFQLEPPLDTEEGRAAADEWDER) are disordered. Over residues 112–124 (EEGRAAADEWDER) the composition is skewed to basic and acidic residues.

Could participate in the normal pathway of protein export. This chain is Acidic protein MsyB (msyB), found in Escherichia coli (strain K12).